Consider the following 60-residue polypeptide: Large ribosomal subunit protein bL32 (60 aa).

The tract at residues 1–21 (MAVQQNKKSPSKRGMHRAHNA) is disordered. Positions 9–19 (SPSKRGMHRAH) are enriched in basic residues.

This sequence belongs to the bacterial ribosomal protein bL32 family.

The sequence is that of Large ribosomal subunit protein bL32 from Albidiferax ferrireducens (strain ATCC BAA-621 / DSM 15236 / T118) (Rhodoferax ferrireducens).